We begin with the raw amino-acid sequence, 284 residues long: Pantothenate synthetase (284 aa).

30–37 (MGNLHDGH) serves as a coordination point for ATP. His-37 acts as the Proton donor in catalysis. Residue Gln-61 coordinates (R)-pantoate. Gln-61 lines the beta-alanine pocket. An ATP-binding site is contributed by 149 to 152 (GEKD). Gln-155 contributes to the (R)-pantoate binding site. Residues Ile-178 and 186-189 (LSSR) each bind ATP.

It belongs to the pantothenate synthetase family. As to quaternary structure, homodimer.

The protein localises to the cytoplasm. The enzyme catalyses (R)-pantoate + beta-alanine + ATP = (R)-pantothenate + AMP + diphosphate + H(+). The protein operates within cofactor biosynthesis; (R)-pantothenate biosynthesis; (R)-pantothenate from (R)-pantoate and beta-alanine: step 1/1. In terms of biological role, catalyzes the condensation of pantoate with beta-alanine in an ATP-dependent reaction via a pantoyl-adenylate intermediate. This Salmonella heidelberg (strain SL476) protein is Pantothenate synthetase.